The chain runs to 316 residues: 4-hydroxy-3-methylbut-2-enyl diphosphate reductase (316 aa).

Cysteine 12 provides a ligand contact to [4Fe-4S] cluster. (2E)-4-hydroxy-3-methylbut-2-enyl diphosphate is bound by residues histidine 41 and histidine 74. Dimethylallyl diphosphate-binding residues include histidine 41 and histidine 74. Histidine 41 and histidine 74 together coordinate isopentenyl diphosphate. [4Fe-4S] cluster is bound at residue cysteine 96. Histidine 124 lines the (2E)-4-hydroxy-3-methylbut-2-enyl diphosphate pocket. Histidine 124 is a dimethylallyl diphosphate binding site. Histidine 124 lines the isopentenyl diphosphate pocket. Residue glutamate 126 is the Proton donor of the active site. Residue threonine 169 participates in (2E)-4-hydroxy-3-methylbut-2-enyl diphosphate binding. Cysteine 199 provides a ligand contact to [4Fe-4S] cluster. Residues serine 227, serine 228, asparagine 229, and serine 271 each coordinate (2E)-4-hydroxy-3-methylbut-2-enyl diphosphate. Positions 227, 228, 229, and 271 each coordinate dimethylallyl diphosphate. Residues serine 227, serine 228, asparagine 229, and serine 271 each contribute to the isopentenyl diphosphate site.

It belongs to the IspH family. [4Fe-4S] cluster is required as a cofactor.

The enzyme catalyses isopentenyl diphosphate + 2 oxidized [2Fe-2S]-[ferredoxin] + H2O = (2E)-4-hydroxy-3-methylbut-2-enyl diphosphate + 2 reduced [2Fe-2S]-[ferredoxin] + 2 H(+). The catalysed reaction is dimethylallyl diphosphate + 2 oxidized [2Fe-2S]-[ferredoxin] + H2O = (2E)-4-hydroxy-3-methylbut-2-enyl diphosphate + 2 reduced [2Fe-2S]-[ferredoxin] + 2 H(+). It functions in the pathway isoprenoid biosynthesis; dimethylallyl diphosphate biosynthesis; dimethylallyl diphosphate from (2E)-4-hydroxy-3-methylbutenyl diphosphate: step 1/1. The protein operates within isoprenoid biosynthesis; isopentenyl diphosphate biosynthesis via DXP pathway; isopentenyl diphosphate from 1-deoxy-D-xylulose 5-phosphate: step 6/6. Catalyzes the conversion of 1-hydroxy-2-methyl-2-(E)-butenyl 4-diphosphate (HMBPP) into a mixture of isopentenyl diphosphate (IPP) and dimethylallyl diphosphate (DMAPP). Acts in the terminal step of the DOXP/MEP pathway for isoprenoid precursor biosynthesis. This chain is 4-hydroxy-3-methylbut-2-enyl diphosphate reductase, found in Vibrio cholerae serotype O1 (strain ATCC 39315 / El Tor Inaba N16961).